The following is a 255-amino-acid chain: Large ribosomal subunit protein eL8 (255 aa).

A compositionally biased stretch (basic residues) spans 1–16 (MPKAPKKITKPKKAEK). A disordered region spans residues 1–28 (MPKAPKKITKPKKAEKKKNPLFQAKPRS).

This sequence belongs to the eukaryotic ribosomal protein eL8 family.

In Tetrahymena thermophila, this protein is Large ribosomal subunit protein eL8 (RPL7A).